The following is a 207-amino-acid chain: Small ribosomal subunit protein uS4 (207 aa).

The segment at 31-51 (KCKLDSKPGQHGRTSGARTSD) is disordered. Residues 97 to 160 (SRLDNVVYRM…KKQARIRESL (64 aa)) enclose the S4 RNA-binding domain.

Belongs to the universal ribosomal protein uS4 family. As to quaternary structure, part of the 30S ribosomal subunit. Contacts protein S5. The interaction surface between S4 and S5 is involved in control of translational fidelity.

One of the primary rRNA binding proteins, it binds directly to 16S rRNA where it nucleates assembly of the body of the 30S subunit. Its function is as follows. With S5 and S12 plays an important role in translational accuracy. The protein is Small ribosomal subunit protein uS4 of Bordetella avium (strain 197N).